Consider the following 698-residue polypeptide: RNA cytosine-C(5)-methyltransferase NSUN2 (698 aa).

Residues methionine 1–glutamine 10 are compositionally biased toward basic residues. Residues methionine 1–glutamate 28 form a disordered region. The span at arginine 11 to glutamate 28 shows a compositional bias: basic and acidic residues. Residues cysteine 182 to lysine 188, aspartate 213, aspartate 240, and aspartate 266 contribute to the S-adenosyl-L-methionine site. Cysteine 319 (nucleophile) is an active-site residue. The tract at residues alanine 472–cysteine 496 is disordered. Residues proline 482–aspartate 493 show a composition bias toward polar residues.

Belongs to the class I-like SAM-binding methyltransferase superfamily. RsmB/NOP family. TRM4 subfamily.

The protein resides in the nucleus. It is found in the nucleolus. Its subcellular location is the cytoplasm. It localises to the mitochondrion. The protein localises to the cytoskeleton. The protein resides in the spindle. It is found in the secreted. Its subcellular location is the extracellular exosome. It carries out the reaction cytidine(48) in tRNA + S-adenosyl-L-methionine = 5-methylcytidine(48) in tRNA + S-adenosyl-L-homocysteine + H(+). The enzyme catalyses cytidine(49) in tRNA + S-adenosyl-L-methionine = 5-methylcytidine(49) in tRNA + S-adenosyl-L-homocysteine + H(+). It catalyses the reaction cytidine(50) in tRNA + S-adenosyl-L-methionine = 5-methylcytidine(50) in tRNA + S-adenosyl-L-homocysteine + H(+). The catalysed reaction is cytidine(34) in tRNA precursor + S-adenosyl-L-methionine = 5-methylcytidine(34) in tRNA precursor + S-adenosyl-L-homocysteine + H(+). It carries out the reaction a cytidine in mRNA + S-adenosyl-L-methionine = a 5-methylcytidine in mRNA + S-adenosyl-L-homocysteine + H(+). In terms of biological role, RNA cytosine C(5)-methyltransferase that methylates cytosine to 5-methylcytosine (m5C) in various RNAs, such as tRNAs, mRNAs and some long non-coding RNAs (lncRNAs). Involved in various processes, such as epidermal stem cell differentiation, testis differentiation and maternal to zygotic transition during early development: acts by increasing protein synthesis; cytosine C(5)-methylation promoting tRNA stability and preventing mRNA decay. Methylates cytosine to 5-methylcytosine (m5C) at positions 34 and 48 of intron-containing tRNA(Leu)(CAA) precursors, and at positions 48, 49 and 50 of tRNA(Gly)(GCC) precursors. tRNA methylation is required generation of RNA fragments derived from tRNAs (tRFs). Also mediates C(5)-methylation of mitochondrial tRNAs. Catalyzes cytosine C(5)-methylation of mRNAs, leading to stabilize them and prevent mRNA decay. Cytosine C(5)-methylation of mRNAs also regulates mRNA export. Also mediates cytosine C(5)-methylation of non-coding RNAs, such as vault RNAs (vtRNAs), promoting their processing into regulatory small RNAs. Required for proper spindle assembly and chromosome segregation, independently of its methyltransferase activity. This chain is RNA cytosine-C(5)-methyltransferase NSUN2, found in Xenopus laevis (African clawed frog).